Here is a 98-residue protein sequence, read N- to C-terminus: Putative zinc finger protein ORF98b (98 aa).

Residues 54-77 (GFCPYCHNHYRTFGILANHIMRSH) form a C2H2-type zinc finger.

The protein is Putative zinc finger protein ORF98b of Acidianus convivator (ATV).